Consider the following 180-residue polypeptide: Large ribosomal subunit protein uL6 (180 aa).

This sequence belongs to the universal ribosomal protein uL6 family. As to quaternary structure, part of the 50S ribosomal subunit.

Functionally, this protein binds to the 23S rRNA, and is important in its secondary structure. It is located near the subunit interface in the base of the L7/L12 stalk, and near the tRNA binding site of the peptidyltransferase center. This is Large ribosomal subunit protein uL6 from Borrelia turicatae (strain 91E135).